A 545-amino-acid polypeptide reads, in one-letter code: CTP synthase (545 aa).

The interval 1-265 (MTKYIFITGG…DEIVVKKLSL (265 aa)) is amidoligase domain. Serine 13 contacts CTP. A UTP-binding site is contributed by serine 13. ATP is bound by residues 14-19 (SLGKGI) and aspartate 71. Mg(2+) contacts are provided by aspartate 71 and glutamate 139. CTP is bound by residues 146–148 (DIE), 186–191 (KTKPTQ), and lysine 222. Residues 186-191 (KTKPTQ) and lysine 222 each bind UTP. Residues 290 to 541 (KIAMVGKYTE…VFAARIHHQE (252 aa)) form the Glutamine amidotransferase type-1 domain. Glycine 351 contributes to the L-glutamine binding site. The active-site Nucleophile; for glutamine hydrolysis is cysteine 378. L-glutamine-binding positions include 379 to 382 (LGMQ), glutamate 402, and arginine 469. Catalysis depends on residues histidine 514 and glutamate 516.

The protein belongs to the CTP synthase family. Homotetramer.

The catalysed reaction is UTP + L-glutamine + ATP + H2O = CTP + L-glutamate + ADP + phosphate + 2 H(+). It carries out the reaction L-glutamine + H2O = L-glutamate + NH4(+). It catalyses the reaction UTP + NH4(+) + ATP = CTP + ADP + phosphate + 2 H(+). The protein operates within pyrimidine metabolism; CTP biosynthesis via de novo pathway; CTP from UDP: step 2/2. Allosterically activated by GTP, when glutamine is the substrate; GTP has no effect on the reaction when ammonia is the substrate. The allosteric effector GTP functions by stabilizing the protein conformation that binds the tetrahedral intermediate(s) formed during glutamine hydrolysis. Inhibited by the product CTP, via allosteric rather than competitive inhibition. In terms of biological role, catalyzes the ATP-dependent amination of UTP to CTP with either L-glutamine or ammonia as the source of nitrogen. Regulates intracellular CTP levels through interactions with the four ribonucleotide triphosphates. This chain is CTP synthase, found in Legionella pneumophila (strain Lens).